A 621-amino-acid polypeptide reads, in one-letter code: MNFVYLVVLCPLVSFCLLLFFIDYLPKMLVKKIGIVSIFISMIITFYSLFDFLNCGKQCVFYIPLWVWISIDYLKIDFNFMLDGLSITMLTMTTSIGFLIHLFSSWYIKLQDEYTRFFSYMNLFIASMVLLLLADNLLVMYIGWEGVGLCSYLLVGFYYSKINSGYAAIKGFIITRIGDIFLILAIFFIYKNFGTLNFRELKLIFETTNVVENFKFLNYVSLFLLIAAIAKSAQVPLQTWLIDAMAGPTPASALIHSSTMVTAGVYLIARMNFLFSLSPIILYILGIISCLTIIMSCLSALVQKNIKCILAYSTMGQVGYMFLALAMKEWTLAINHLVTHAIFKTLLFLSAGAVIILLNNEKNIFNMGGLRKKFPMLYFSFLIGGASLASFPILTSGFYSKGNILFSALENNYYLFLVLGLLGSVLTSIYTFRMIFLVFCGAQKYRAHYVFFSRTLANTLPLLILILLSTVIFVLIHLPLSSVFSKTTPSFLINNNKLLFEIGCSVLSLLGMFISYYLFLVNRMLVDLLLNTKLGNFIYNFWYDSWGFNSLYNILCVNPYLYVAKRLKHDPINIFMSIPITFCFFVSKNLKYIHNGYLRVYVFSIMFGLFLFILMAIRLYK.

17 helical membrane-spanning segments follow: residues 2-22, 33-53, 59-79, 80-100, 123-143, 169-189, 210-230, 249-269, 274-294, 306-326, 338-358, 374-394, 412-432, 460-480, 500-520, 537-557, and 597-617; these read NFVY…LFFI, IGIV…FDFL, CVFY…IDFN, FMLD…GFLI, LFIA…MYIG, IKGF…IFFI, VVEN…AAIA, TPAS…YLIA, LFSL…LTII, IKCI…LALA, VTHA…IILL, FPML…FPIL, NYYL…IYTF, LPLL…HLPL, FEIG…YLFL, FIYN…ILCV, and YLRV…LMAI.

This sequence belongs to the complex I subunit 5 family. Composed of 13 different subunits. Subunits NuoA, H, J, K, L, M, N constitute the membrane sector of the complex.

The protein resides in the cell membrane. It catalyses the reaction a quinone + NADH + 5 H(+)(in) = a quinol + NAD(+) + 4 H(+)(out). Its function is as follows. NDH-1 shuttles electrons from NADH, via FMN and iron-sulfur (Fe-S) centers, to quinones in the respiratory chain. Couples the redox reaction to proton translocation (for every two electrons transferred, four hydrogen ions are translocated across the cytoplasmic membrane), and thus conserves the redox energy in a proton gradient. This chain is NADH-quinone oxidoreductase subunit L (nuoL), found in Buchnera aphidicola subsp. Baizongia pistaciae (strain Bp).